We begin with the raw amino-acid sequence, 890 residues long: DNA mismatch repair protein MutS (890 aa).

607 to 614 contacts ATP; sequence GPNMSGKS. The tract at residues 832-851 is disordered; the sequence is ESQLSFFGTEQSSKKQDKPV.

Belongs to the DNA mismatch repair MutS family.

This protein is involved in the repair of mismatches in DNA. It is possible that it carries out the mismatch recognition step. This protein has a weak ATPase activity. This is DNA mismatch repair protein MutS from Bacillus cereus (strain 03BB102).